A 338-amino-acid polypeptide reads, in one-letter code: Phosphate acyltransferase (338 aa).

This sequence belongs to the PlsX family. Homodimer. Probably interacts with PlsY.

It localises to the cytoplasm. It catalyses the reaction a fatty acyl-[ACP] + phosphate = an acyl phosphate + holo-[ACP]. It functions in the pathway lipid metabolism; phospholipid metabolism. Its function is as follows. Catalyzes the reversible formation of acyl-phosphate (acyl-PO(4)) from acyl-[acyl-carrier-protein] (acyl-ACP). This enzyme utilizes acyl-ACP as fatty acyl donor, but not acyl-CoA. In Mannheimia succiniciproducens (strain KCTC 0769BP / MBEL55E), this protein is Phosphate acyltransferase.